The following is a 218-amino-acid chain: Adenylate kinase (218 aa).

Position 12–17 (12–17) interacts with ATP; that stretch reads GAGKGT. An NMP region spans residues 32 to 61; the sequence is STGDIFRKNISENTPLGIEAKSYMDNGQLV. AMP is bound by residues threonine 33, arginine 38, 59–61, 87–90, and glutamine 94; these read QLV and GFPR. The LID stretch occupies residues 128 to 165; it reads GRRVCPSCGASYHIKFNPPTNDGKCDLCGSDVIQRKDD. Arginine 129 lines the ATP pocket. Zn(2+) contacts are provided by cysteine 132 and cysteine 135. An ATP-binding site is contributed by 138 to 139; that stretch reads SY. Residues cysteine 152 and cysteine 155 each contribute to the Zn(2+) site. Positions 162 and 173 each coordinate AMP. Position 201 (glutamine 201) interacts with ATP.

The protein belongs to the adenylate kinase family. Monomer.

It localises to the cytoplasm. The enzyme catalyses AMP + ATP = 2 ADP. Its pathway is purine metabolism; AMP biosynthesis via salvage pathway; AMP from ADP: step 1/1. In terms of biological role, catalyzes the reversible transfer of the terminal phosphate group between ATP and AMP. Plays an important role in cellular energy homeostasis and in adenine nucleotide metabolism. In Clostridium perfringens (strain 13 / Type A), this protein is Adenylate kinase.